A 533-amino-acid chain; its full sequence is Beta-1,4 N-acetylgalactosaminyltransferase 1 (533 aa).

Over 1–7 (MRLDRRA) the chain is Cytoplasmic. Residues 8 to 25 (LYALVLLLACASLGLLYS) traverse the membrane as a helical; Signal-anchor for type II membrane protein segment. Residues 26-533 (STRNAPSLPN…KHRLQCMTAE (508 aa)) lie on the Lumenal side of the membrane. Asn79, Asn179, and Asn274 each carry an N-linked (GlcNAc...) asparagine glycan. A disulfide bridge connects residues Cys429 and Cys476.

This sequence belongs to the glycosyltransferase 2 family. As to quaternary structure, homodimer; disulfide-linked. Most abundant in brain, liver, lung, spleen and testis.

It localises to the golgi apparatus membrane. The enzyme catalyses a ganglioside GM3 (d18:1(4E)) + UDP-N-acetyl-alpha-D-galactosamine = a ganglioside GM2 (d18:1(4E)) + UDP + H(+). It catalyses the reaction a ganglioside GD3 (d18:1(4E)) + UDP-N-acetyl-alpha-D-galactosamine = a ganglioside GD2 (d18:1(4E)) + UDP + H(+). The catalysed reaction is a ganglioside GM3 + UDP-N-acetyl-alpha-D-galactosamine = a ganglioside GM2 + UDP + H(+). It carries out the reaction a ganglioside GD3 + UDP-N-acetyl-alpha-D-galactosamine = a ganglioside GD2 + UDP + H(+). The enzyme catalyses a ganglioside GD1a + UDP-N-acetyl-alpha-D-galactosamine = a ganglioside GalNAc-GD1a + UDP + H(+). It catalyses the reaction a ganglioside GT3 (d18:1(4E)) + UDP-N-acetyl-alpha-D-galactosamine = a ganglioside GT2 (d18:1(4E)) + UDP + H(+). The catalysed reaction is a beta-D-Gal-(1-&gt;4)-beta-D-Glc-(1&lt;-&gt;1)-Cer(d18:1(4E)) + UDP-N-acetyl-alpha-D-galactosamine = a ganglioside GA2 (d18:1(4E)) + UDP + H(+). It carries out the reaction a neolactoside IV(3)-alpha-NeuGc-nLc4Cer + UDP-N-acetyl-alpha-D-galactosamine = a neolactoside IV(4)-beta-GalNAc-IV(3)-alpha-NeuGc-nLc4Cer + UDP + H(+). It participates in sphingolipid metabolism. Its function is as follows. Involved in the biosynthesis of gangliosides GM2, GD2 and GA2. Involved in the biosynthesis of gangliosides GM2, GD2, GT2 and GA2 from GM3, GD3, GT3 and GA3, respectively. This is Beta-1,4 N-acetylgalactosaminyltransferase 1 from Mus musculus (Mouse).